Here is a 208-residue protein sequence, read N- to C-terminus: Small ribosomal subunit protein uS4 (208 aa).

The tract at residues 24-52 (GVKPFDVKTKKANKAPGQHGQARGGKQSE) is disordered. The 63-residue stretch at 98–160 (SRLDNVVYRM…AKQQLRIKNA (63 aa)) folds into the S4 RNA-binding domain.

This sequence belongs to the universal ribosomal protein uS4 family. As to quaternary structure, part of the 30S ribosomal subunit. Contacts protein S5. The interaction surface between S4 and S5 is involved in control of translational fidelity.

Functionally, one of the primary rRNA binding proteins, it binds directly to 16S rRNA where it nucleates assembly of the body of the 30S subunit. With S5 and S12 plays an important role in translational accuracy. This Acinetobacter baumannii (strain ACICU) protein is Small ribosomal subunit protein uS4.